The chain runs to 707 residues: Nucleolin 2 (707 aa).

The disordered stretch occupies residues 1-446 (MGKSSKKSAV…TPASNQNQAT (446 aa)). Composition is skewed to basic and acidic residues over residues 30–40 (RNAEDEIEKAV) and 47–60 (TVRE…EEAK). Composition is skewed to acidic residues over residues 75–85 (SSEEDSSESEE), 108–120 (SSDD…SSDD), and 144–153 (DSSDESLSDD). A compositionally biased stretch (low complexity) spans 158–170 (KPAAPLKKPVALA). Composition is skewed to acidic residues over residues 219-232 (DSSD…SDED), 248-263 (SESS…DDEA), and 271-287 (ESSD…SDSD). A compositionally biased stretch (basic and acidic residues) spans 300-311 (LTKDTKKGQSKD). A compositionally biased stretch (acidic residues) spans 312–326 (ESEDSSDESSEESGD). A compositionally biased stretch (low complexity) spans 336-347 (STTSGTTKPSPK). The span at 355-370 (SDDESDEDDSSDESSD) shows a compositional bias: acidic residues. The segment covering 376–394 (KQTQAKKQAPVAQESSSSD) has biased composition (low complexity). Over residues 395 to 406 (ESSEEDSDMESD) the composition is skewed to acidic residues. Basic and acidic residues predominate over residues 407–417 (EPAKTPQKKET). The segment covering 420-429 (SVGSNKSATK) has biased composition (polar residues). The RRM 1 domain occupies 449 to 525 (KTLFVGNLPY…RPVRLDLARE (77 aa)). Disordered regions lie at residues 527-546 (GAYT…PAQS) and 629-707 (RPRP…GDDD). An RRM 2 domain is found at 549–630 (NTIFIKGFDT…YSLYVDEARP (82 aa)). The span at 657-681 (GRGDGSRGRGDRGRGRGFGRGDRGH) shows a compositional bias: basic and acidic residues.

The protein resides in the nucleus. It localises to the nucleolus. In terms of biological role, involved in pre-rRNA processing and ribosome assembly. The protein is Nucleolin 2 of Oryza sativa subsp. japonica (Rice).